Reading from the N-terminus, the 76-residue chain is Small ribosomal subunit protein bS18 (76 aa).

This sequence belongs to the bacterial ribosomal protein bS18 family. In terms of assembly, part of the 30S ribosomal subunit. Forms a tight heterodimer with protein bS6.

In terms of biological role, binds as a heterodimer with protein bS6 to the central domain of the 16S rRNA, where it helps stabilize the platform of the 30S subunit. This Alkaliphilus metalliredigens (strain QYMF) protein is Small ribosomal subunit protein bS18.